We begin with the raw amino-acid sequence, 212 residues long: Thymidylate kinase (212 aa).

10 to 17 contributes to the ATP binding site; the sequence is GLEGAGKT.

This sequence belongs to the thymidylate kinase family.

The enzyme catalyses dTMP + ATP = dTDP + ADP. In terms of biological role, phosphorylation of dTMP to form dTDP in both de novo and salvage pathways of dTTP synthesis. This Yersinia pseudotuberculosis serotype O:3 (strain YPIII) protein is Thymidylate kinase.